The following is a 338-amino-acid chain: Lipoyl synthase (338 aa).

Residues 1-24 (MTTVQEAVPNLIPTQDATPRPAPK) form a disordered region. The [4Fe-4S] cluster site is built by C84, C89, C95, C110, C114, C117, and S324. One can recognise a Radical SAM core domain in the interval 96 to 313 (FSGGTATFMI…AEEGYKMGFK (218 aa)).

This sequence belongs to the radical SAM superfamily. Lipoyl synthase family. The cofactor is [4Fe-4S] cluster.

It localises to the cytoplasm. It carries out the reaction [[Fe-S] cluster scaffold protein carrying a second [4Fe-4S](2+) cluster] + N(6)-octanoyl-L-lysyl-[protein] + 2 oxidized [2Fe-2S]-[ferredoxin] + 2 S-adenosyl-L-methionine + 4 H(+) = [[Fe-S] cluster scaffold protein] + N(6)-[(R)-dihydrolipoyl]-L-lysyl-[protein] + 4 Fe(3+) + 2 hydrogen sulfide + 2 5'-deoxyadenosine + 2 L-methionine + 2 reduced [2Fe-2S]-[ferredoxin]. The protein operates within protein modification; protein lipoylation via endogenous pathway; protein N(6)-(lipoyl)lysine from octanoyl-[acyl-carrier-protein]: step 2/2. Catalyzes the radical-mediated insertion of two sulfur atoms into the C-6 and C-8 positions of the octanoyl moiety bound to the lipoyl domains of lipoate-dependent enzymes, thereby converting the octanoylated domains into lipoylated derivatives. This Pseudomonas putida (strain W619) protein is Lipoyl synthase.